We begin with the raw amino-acid sequence, 324 residues long: Zinc metalloproteinase leucurolysin-B (324 aa).

In terms of domain architecture, Peptidase M12B spans Asp1–Pro119. Asp11 is a Ca(2+) binding site. 3 disulfide bridges follow: Cys34–Cys114, Cys74–Cys98, and Cys76–Cys81. Residue His59 participates in Zn(2+) binding. Residue Glu60 is part of the active site. Zn(2+) contacts are provided by His63 and His69. A glycan (N-linked (GlcNAc...) asparagine) is linked at Asn97. Ca(2+) contacts are provided by Cys114, Asn117, Val129, Asn132, Leu134, Glu136, Glu139, and Asp142. The 87-residue stretch at Pro127–Asn213 folds into the Disintegrin domain. Cystine bridges form between Cys130–Cys159, Cys141–Cys154, Cys143–Cys149, Cys153–Cys176, Cys167–Cys173, Cys172–Cys198, Cys185–Cys205, Cys192–Cys224, Cys217–Cys229, Cys236–Cys286, Cys251–Cys295, Cys264–Cys274, and Cys281–Cys315. The short motif at Glu191–Asp193 is the D/ECD-tripeptide element. Asn296 and Asn305 each carry an N-linked (GlcNAc...) asparagine glycan.

It belongs to the venom metalloproteinase (M12B) family. P-III subfamily. P-IIIa sub-subfamily. Monomer. It depends on Zn(2+) as a cofactor. In terms of processing, N-glycosylated. Post-translationally, the N-terminus is blocked. In terms of tissue distribution, expressed by the venom gland.

It localises to the secreted. Inhibited by EDTA, but not by PMSF. Pre-incubation with 2 mM DTT completely abolishes activity. Functionally, snake venom zinc metalloproteinase that acts as a potent hemorrhagic toxin. Hydrolyzes the insulin B chain at the 14-Ala-|-Leu-15 bond but not the 16-Tyr-|-Leu-17 bond. Degrades the alpha-chain of fibrin and hydrolyzes the Aalpha-chain of fibrinogen (FGA) while leaving the beta and gamma chains unaffected. Degrades type-I collagen and its gelatin. Degrades the alpha-1 chain of type-IV collagen and its gelatin but not the alpha-2 chain. Degrades plasma fibronectin, plasma vitronectin and basement membrane enactin. It inhibits collagen-induced platelet aggregation. The polypeptide is Zinc metalloproteinase leucurolysin-B (Bothrops leucurus (Whitetail lancehead)).